The sequence spans 161 residues: Cytochrome c-type biogenesis protein CcmE (161 aa).

Topologically, residues 1-8 (MNARRKKR) are cytoplasmic. Residues 9–29 (LALATALIGGVAAIASLLLYA) form a helical; Signal-anchor for type II membrane protein membrane-spanning segment. Residues 30–161 (LNSNLNLFYT…DYNAEQKSGY (132 aa)) lie on the Periplasmic side of the membrane. Residues His131 and Tyr135 each coordinate heme.

The protein belongs to the CcmE/CycJ family.

Its subcellular location is the cell inner membrane. Its function is as follows. Heme chaperone required for the biogenesis of c-type cytochromes. Transiently binds heme delivered by CcmC and transfers the heme to apo-cytochromes in a process facilitated by CcmF and CcmH. The protein is Cytochrome c-type biogenesis protein CcmE of Shewanella woodyi (strain ATCC 51908 / MS32).